The sequence spans 494 residues: Cytochrome P450 2A10 (494 aa).

Lys379 carries the post-translational modification N6-acetyllysine. Residue Cys439 participates in heme binding.

The protein belongs to the cytochrome P450 family. The cofactor is heme. In terms of tissue distribution, expressed in liver and lung as well as in nasal tissues.

The protein resides in the endoplasmic reticulum membrane. It localises to the microsome membrane. It carries out the reaction an organic molecule + reduced [NADPH--hemoprotein reductase] + O2 = an alcohol + oxidized [NADPH--hemoprotein reductase] + H2O + H(+). In terms of biological role, catalyzes the oxygenation of a variety of substrates, including ethanol and procarcinogens such as N-nitrosodiethylamine and phenacetin. Exhibits a high coumarin 7-hydroxylase activity. Converts also testosterone to androstenedione. This is Cytochrome P450 2A10 (CYP2A10) from Oryctolagus cuniculus (Rabbit).